The primary structure comprises 223 residues: Putative 3-methyladenine DNA glycosylase (223 aa).

The protein belongs to the DNA glycosylase MPG family.

The chain is Putative 3-methyladenine DNA glycosylase from Pseudomonas syringae pv. syringae (strain B728a).